A 271-amino-acid polypeptide reads, in one-letter code: 1,4-dihydroxy-2-naphthoyl-CoA synthase (271 aa).

Substrate-binding positions include 71–75 (SGGDQ), Tyr83, 115–119 (YAIGG), Thr141, Ser147, Tyr244, and Lys259. Residue 140 to 142 (QTG) coordinates hydrogencarbonate. The span at 250–263 (KEGRDSFKEKRKPD) shows a compositional bias: basic and acidic residues. The tract at residues 250 to 271 (KEGRDSFKEKRKPDFGQFPRFP) is disordered.

It belongs to the enoyl-CoA hydratase/isomerase family. MenB subfamily. The cofactor is hydrogencarbonate.

It catalyses the reaction 2-succinylbenzoyl-CoA + H(+) = 1,4-dihydroxy-2-naphthoyl-CoA + H2O. Its pathway is quinol/quinone metabolism; 1,4-dihydroxy-2-naphthoate biosynthesis; 1,4-dihydroxy-2-naphthoate from chorismate: step 6/7. The protein operates within quinol/quinone metabolism; menaquinone biosynthesis. Functionally, converts o-succinylbenzoyl-CoA (OSB-CoA) to 1,4-dihydroxy-2-naphthoyl-CoA (DHNA-CoA). In Bacillus subtilis (strain 168), this protein is 1,4-dihydroxy-2-naphthoyl-CoA synthase.